Here is a 426-residue protein sequence, read N- to C-terminus: MDRIKIRGGHRLKGRIPVSGAKNAVLALMPASLLTSDSLTLINLPRLADVDSCCHLLNELGVSTMVARSKGDHPGREITLTADTIASTVAPYDIVRKMRASILVLGPLLAREGEATVSLPGGCAIGNRPIDLHLRALEALGAEIELTAGYVRARAPDGGLRGGIISFPVVSVGATENAIMAAVLARGETVINNAAREPEIVDLCQCLMAMGAKIDGVGNSRLVIHGCDRLHGATHVVMPDRIEAGSYACAAAITGGDVLLQGARSADMAEVLVELKESGLNISVEEDGIRVQADAPLKGLTLSTAPFPGFPTDMQAQFMAMLALAQGTSVLTETIFENRYMHVPELVRMGADIQVKGRVAVVKGVSGLVGAEVMATDLRASMSLIIAALAAEGETQVHRVYHLDRGYERLEEKLSAVGADIERVGG.

22–23 is a phosphoenolpyruvate binding site; sequence KN. Residue Arg99 participates in UDP-N-acetyl-alpha-D-glucosamine binding. Cys123 (proton donor) is an active-site residue. Cys123 is modified (2-(S-cysteinyl)pyruvic acid O-phosphothioketal). UDP-N-acetyl-alpha-D-glucosamine is bound by residues 128–132, Asp313, and Ile335; that span reads RPIDL.

Belongs to the EPSP synthase family. MurA subfamily.

It localises to the cytoplasm. The catalysed reaction is phosphoenolpyruvate + UDP-N-acetyl-alpha-D-glucosamine = UDP-N-acetyl-3-O-(1-carboxyvinyl)-alpha-D-glucosamine + phosphate. Its pathway is cell wall biogenesis; peptidoglycan biosynthesis. In terms of biological role, cell wall formation. Adds enolpyruvyl to UDP-N-acetylglucosamine. The polypeptide is UDP-N-acetylglucosamine 1-carboxyvinyltransferase (Zymomonas mobilis subsp. mobilis (strain ATCC 31821 / ZM4 / CP4)).